Here is a 136-residue protein sequence, read N- to C-terminus: Large ribosomal subunit protein uL16c (136 aa).

It belongs to the universal ribosomal protein uL16 family. In terms of assembly, part of the 50S ribosomal subunit.

Its subcellular location is the plastid. It is found in the chloroplast. This is Large ribosomal subunit protein uL16c from Saccharum hybrid (Sugarcane).